The primary structure comprises 360 residues: Iron uptake protein A1 (360 aa).

The first 28 residues, Met1–Ser28, serve as a signal peptide directing secretion. Cys29 carries the N-palmitoyl cysteine lipid modification. Cys29 carries S-diacylglycerol cysteine lipidation. Fe cation-binding residues include His54, Tyr55, Tyr185, Tyr241, and Tyr242.

Belongs to the bacterial solute-binding protein 1 family.

The protein resides in the cellular thylakoid membrane. Its subcellular location is the cell membrane. Its function is as follows. Plays an important role in protecting the acceptor side of photosystem II (PSII) against oxidative damage, especially under iron-limiting growth conditions. The differing subcellular locations of futA1 (predominantly thylakoid lumen) and futA2 (predominantly periplasmic) suggest they may fulfill different roles. Functionally, a major iron-binding protein involved in Fe(3+) uptake, probably part of a periplasmic ABC transporter complex futA1A2BC (TC 3.A.1.10.2) involved in Fe(3+) ion import (ferric iron). This protein and futA2 (slr0531) may be subunit proteins that have redundant or overlapping substrate-binding functions. This Synechocystis sp. (strain ATCC 27184 / PCC 6803 / Kazusa) protein is Iron uptake protein A1 (futA1).